An 843-amino-acid chain; its full sequence is Protein P (843 aa).

The terminal protein domain (TP) stretch occupies residues 1–177; it reads MPLSYQHFRK…FCGSPYSWEQ (177 aa). Residues 178–346 form a spacer region; that stretch reads ELQHGRLVFQ…YCLTHIVNLL (169 aa). Disordered regions lie at residues 224–273 and 288–316; these read GLQP…SSTS and HLST…RSQS. The segment covering 288-299 has biased composition (polar residues); that stretch reads HLSTSKRQSSSG. The segment at 347 to 690 is polymerase/reverse transcriptase domain (RT); it reads EDWGPCTEHG…YLNLYPVARQ (344 aa). Residues 357-600 form the Reverse transcriptase domain; sequence EHNIRIPRTP…YSLNFMGYVI (244 aa). 3 residues coordinate Mg(2+): D429, D551, and D552.

This sequence belongs to the hepadnaviridae P protein family.

It catalyses the reaction DNA(n) + a 2'-deoxyribonucleoside 5'-triphosphate = DNA(n+1) + diphosphate. It carries out the reaction Endonucleolytic cleavage to 5'-phosphomonoester.. Activated by host HSP70 and HSP40 in vitro to be able to bind the epsilon loop of the pgRNA. Because deletion of the RNase H region renders the protein partly chaperone-independent, the chaperones may be needed indirectly to relieve occlusion of the RNA-binding site by this domain. Inhibited by several reverse-transcriptase inhibitors: Lamivudine, Adefovir and Entecavir. Its function is as follows. Multifunctional enzyme that converts the viral RNA genome into dsDNA in viral cytoplasmic capsids. This enzyme displays a DNA polymerase activity that can copy either DNA or RNA templates, and a ribonuclease H (RNase H) activity that cleaves the RNA strand of RNA-DNA heteroduplexes in a partially processive 3'- to 5'-endonucleasic mode. Neo-synthesized pregenomic RNA (pgRNA) are encapsidated together with the P protein, and reverse-transcribed inside the nucleocapsid. Initiation of reverse-transcription occurs first by binding the epsilon loop on the pgRNA genome, and is initiated by protein priming, thereby the 5'-end of (-)DNA is covalently linked to P protein. Partial (+)DNA is synthesized from the (-)DNA template and generates the relaxed circular DNA (RC-DNA) genome. After budding and infection, the RC-DNA migrates in the nucleus, and is converted into a plasmid-like covalently closed circular DNA (cccDNA). The activity of P protein does not seem to be necessary for cccDNA generation, and is presumably released from (+)DNA by host nuclear DNA repair machinery. The polypeptide is Protein P (Homo sapiens (Human)).